The sequence spans 345 residues: Biotin synthase (345 aa).

The Radical SAM core domain maps to 39 to 266 (NEVQVSTLLS…ASHVRLSAGR (228 aa)). C54, C58, and C61 together coordinate [4Fe-4S] cluster. Positions 98, 129, 189, and 261 each coordinate [2Fe-2S] cluster.

It belongs to the radical SAM superfamily. Biotin synthase family. Homodimer. It depends on [4Fe-4S] cluster as a cofactor. [2Fe-2S] cluster serves as cofactor.

It catalyses the reaction (4R,5S)-dethiobiotin + (sulfur carrier)-SH + 2 reduced [2Fe-2S]-[ferredoxin] + 2 S-adenosyl-L-methionine = (sulfur carrier)-H + biotin + 2 5'-deoxyadenosine + 2 L-methionine + 2 oxidized [2Fe-2S]-[ferredoxin]. It participates in cofactor biosynthesis; biotin biosynthesis; biotin from 7,8-diaminononanoate: step 2/2. Functionally, catalyzes the conversion of dethiobiotin (DTB) to biotin by the insertion of a sulfur atom into dethiobiotin via a radical-based mechanism. The protein is Biotin synthase of Idiomarina loihiensis (strain ATCC BAA-735 / DSM 15497 / L2-TR).